We begin with the raw amino-acid sequence, 527 residues long: UDP-glucuronosyltransferase 2A1 (527 aa).

Residues 1–20 form the signal peptide; it reads MLNNLLLFSLQISLIGTTLG. The Lumenal segment spans residues 21–491; the sequence is GNVLIWPMEG…TWFQYHSLDV (471 aa). N-linked (GlcNAc...) asparagine glycosylation is found at N49, L313, and N347. A helical membrane pass occupies residues 492–512; that stretch reads IGFLLVCVTTAIFLVIQCCLF. Residues 513–527 lie on the Cytoplasmic side of the membrane; sequence SCQKFGKIGKKKKRE.

The protein belongs to the UDP-glycosyltransferase family. As to expression, olfactory epithelium, brain and fetal lung. Not present in liver.

Its subcellular location is the membrane. The protein localises to the endoplasmic reticulum membrane. It catalyses the reaction glucuronate acceptor + UDP-alpha-D-glucuronate = acceptor beta-D-glucuronoside + UDP + H(+). It carries out the reaction 16beta,17beta-estriol + UDP-alpha-D-glucuronate = 16beta,17beta-estriol 16-O-(beta-D-glucuronate) + UDP + H(+). The enzyme catalyses 16alpha,17alpha-estriol + UDP-alpha-D-glucuronate = 16alpha,17alpha-estriol 16-O-(beta-D-glucuronate) + UDP + H(+). The catalysed reaction is 17alpha-estradiol + UDP-alpha-D-glucuronate = 17alpha-estradiol 17-O-(beta-D-glucuronate) + UDP + H(+). It catalyses the reaction 17alpha-estradiol + UDP-alpha-D-glucuronate = 17alpha-estradiol 3-O-(beta-D-glucuronate) + UDP + H(+). It carries out the reaction 17beta-estradiol + UDP-alpha-D-glucuronate = 17beta-estradiol 3-O-(beta-D-glucuronate) + UDP + H(+). The enzyme catalyses 17beta-estradiol + UDP-alpha-D-glucuronate = 17beta-estradiol 17-O-(beta-D-glucuronate) + UDP + H(+). The catalysed reaction is testosterone + UDP-alpha-D-glucuronate = testosterone 17-O-(beta-D-glucuronate) + UDP + H(+). It catalyses the reaction epitestosterone + UDP-alpha-D-glucuronate = epitestosterone 17-O-(beta-D-glucuronate) + UDP + H(+). It carries out the reaction lithocholate + UDP-alpha-D-glucuronate = lithocholoyl-3-O-(beta-D-glucuronate) + UDP + H(+). The enzyme catalyses lithocholate + UDP-alpha-D-glucuronate = lithocholoyl-24-O-(beta-D-glucuronate) + UDP. The catalysed reaction is deoxycholate + UDP-alpha-D-glucuronate = deoxycholoyl-24-O-(beta-D-glucuronate) + UDP. It catalyses the reaction hyodeoxycholate + UDP-alpha-D-glucuronate = hyodeoxycholoyl-24-O-(beta-D-glucuronate) + UDP. It carries out the reaction hyocholate + UDP-alpha-D-glucuronate = hyocholoyl-24-O-(beta-D-glucuronate) + UDP. Its function is as follows. UDP-glucuronosyltransferase (UGT) that catalyzes phase II biotransformation reactions in which lipophilic substrates are conjugated with glucuronic acid to increase the metabolite's water solubility, thereby facilitating excretion into either the urine or bile. Essential for the elimination and detoxification of drugs, xenobiotics and endogenous compounds. Catalyzes the glucuronidation of endogenous steroid hormones such as androgens (testosterone and epitestosterone) and estrogens (estradiol and epiestriol). Contributes to bile acid (BA) detoxification by catalyzing the glucuronidation of BA substrates, which are natural detergents for dietary lipids absorption. Shows a high affinity to aliphatic odorants such as citronellol as well as olfactory tissue specificity, and therefore may be involved in olfaction. Shows a potential role in detoxification of toxic waste compounds in the amniotic fluid before birth, and air-born chemical after birth. This chain is UDP-glucuronosyltransferase 2A1, found in Homo sapiens (Human).